Here is a 119-residue protein sequence, read N- to C-terminus: uncharacterized protein (119 aa).

Its subcellular location is the mitochondrion. This is an uncharacterized protein from Arabidopsis thaliana (Mouse-ear cress).